Here is a 401-residue protein sequence, read N- to C-terminus: Dual-specificity RNA methyltransferase RlmN (401 aa).

Glu-114 (proton acceptor) is an active-site residue. The Radical SAM core domain maps to 120–365 (DKTRGTLCVS…TMVRRTRGDD (246 aa)). Cys-127 and Cys-370 are oxidised to a cystine. 3 residues coordinate [4Fe-4S] cluster: Cys-134, Cys-138, and Cys-141. Residues 187–188 (GE), Ser-219, 241–243 (SLH), and Asn-327 contribute to the S-adenosyl-L-methionine site. Residue Cys-370 is the S-methylcysteine intermediate of the active site.

This sequence belongs to the radical SAM superfamily. RlmN family. [4Fe-4S] cluster serves as cofactor.

It is found in the cytoplasm. The enzyme catalyses adenosine(2503) in 23S rRNA + 2 reduced [2Fe-2S]-[ferredoxin] + 2 S-adenosyl-L-methionine = 2-methyladenosine(2503) in 23S rRNA + 5'-deoxyadenosine + L-methionine + 2 oxidized [2Fe-2S]-[ferredoxin] + S-adenosyl-L-homocysteine. It catalyses the reaction adenosine(37) in tRNA + 2 reduced [2Fe-2S]-[ferredoxin] + 2 S-adenosyl-L-methionine = 2-methyladenosine(37) in tRNA + 5'-deoxyadenosine + L-methionine + 2 oxidized [2Fe-2S]-[ferredoxin] + S-adenosyl-L-homocysteine. Its function is as follows. Specifically methylates position 2 of adenine 2503 in 23S rRNA and position 2 of adenine 37 in tRNAs. m2A2503 modification seems to play a crucial role in the proofreading step occurring at the peptidyl transferase center and thus would serve to optimize ribosomal fidelity. The polypeptide is Dual-specificity RNA methyltransferase RlmN (Stenotrophomonas maltophilia (strain R551-3)).